The chain runs to 75 residues: Phytosulfokines (75 aa).

A signal peptide spans 1–22 (MSSKAITLLLIALLFSLSLAQA). Positions 23–66 (ARPLQPADSTKSVHVIPEKVHDEACEGVGEEECLMRRTLTAHVD) are excised as a propeptide. Sulfotyrosine occurs at positions 67 and 69. A propeptide spanning residues 72–75 (DHNP) is cleaved from the precursor.

The protein belongs to the phytosulfokine family. Post-translationally, sulfation is important for activity and for the binding to a putative membrane receptor. Deletion of the sulfate groups of Tyr-67 and Tyr-69 resulted in compounds with respectively 0.6% and 4% of the activity. PSK-alpha is produced by endopeptidase digestion. PSK-beta is produced from PSK-alpha by exopeptidase digestion.

It localises to the secreted. Its function is as follows. Promotes plant cell differentiation, organogenesis and somatic embryogenesis as well as cell proliferation. This chain is Phytosulfokines (PSK), found in Asparagus officinalis (Garden asparagus).